The sequence spans 120 residues: Large ribosomal subunit protein bL20 (120 aa).

This sequence belongs to the bacterial ribosomal protein bL20 family.

Functionally, binds directly to 23S ribosomal RNA and is necessary for the in vitro assembly process of the 50S ribosomal subunit. It is not involved in the protein synthesizing functions of that subunit. The chain is Large ribosomal subunit protein bL20 from Cereibacter sphaeroides (strain ATCC 17029 / ATH 2.4.9) (Rhodobacter sphaeroides).